The following is a 972-amino-acid chain: Optomotor-blind protein (972 aa).

Disordered regions lie at residues 44-248 (SLLT…YFPA), 263-286 (PGLY…HAHH), 508-563 (AKGF…HPHA), 645-676 (ADVE…TGSP), 805-889 (AVTP…PSEL), and 918-972 (EEAA…GTDQ). 2 stretches are compositionally biased toward low complexity: residues 49 to 80 (GSNN…NTNN) and 97 to 142 (SNHS…NNTS). Positions 155-176 (PPSPAGTPPPTIVGLPPIPPPN) are enriched in pro residues. Composition is skewed to low complexity over residues 177–193 (NNSS…AAAH) and 201–212 (AHHSPSTGAAAP). A compositionally biased stretch (pro residues) spans 213-225 (PAGPTGLPPPTPP). Positions 226–237 (HHLQQQQQQQQH) are enriched in low complexity. Over residues 274 to 286 (PPHHPGAHPHAHH) the composition is skewed to basic residues. Positions 332 to 513 (LEGKDLWEKF…NNPFAKGFRD (182 aa)) form a DNA-binding region, T-box. Positions 818–831 (PPGGGGGGLGGGVV) are enriched in gly residues. The span at 835 to 851 (PRSLSSSPRPRPASHSP) shows a compositional bias: low complexity. Ser887 is modified (phosphoserine). Residues 952 to 963 (HPHHQTHLHSHH) show a composition bias toward basic residues.

As to expression, in third-instar larvae, expressed in the brain region that will develop into optic lobes and more weakly in the thoracic part of the ventral ganglion.

The protein resides in the nucleus. Essential protein that may function as a transcription regulator. Vital for pupal development. Required for proper development of the optic lobes and wings, and abdominal pigmentation. In Drosophila melanogaster (Fruit fly), this protein is Optomotor-blind protein (bi).